A 1212-amino-acid chain; its full sequence is uncharacterized protein (1212 aa).

The interval 783–802 (TRQDASGGSSSGTKKGEKLQ) is disordered.

This is an uncharacterized protein from Human herpesvirus 6B (strain Z29) (HHV-6 variant B).